Reading from the N-terminus, the 304-residue chain is Cell surface-binding protein OPG105 (304 aa).

An Alpha-carbonic anhydrase domain is found at M1–G235. Over M1–T275 the chain is Virion surface. A helical membrane pass occupies residues F276–M294. Residues S295 to N304 lie on the Intravirion side of the membrane.

It belongs to the alpha-carbonic anhydrase family. In terms of assembly, homodimer; disulfide-linked. Apparently non-glycosylated.

The protein resides in the virion membrane. Its function is as follows. Binds to chondroitin sulfate on the cell surface to provide virion attachment to target cell. The sequence is that of Cell surface-binding protein OPG105 (OPG105) from Monkeypox virus (strain Zaire-96-I-16) (MPX).